We begin with the raw amino-acid sequence, 182 residues long: Ribosome maturation factor RimP (182 aa).

This sequence belongs to the RimP family.

The protein localises to the cytoplasm. Its function is as follows. Required for maturation of 30S ribosomal subunits. This is Ribosome maturation factor RimP from Corynebacterium efficiens (strain DSM 44549 / YS-314 / AJ 12310 / JCM 11189 / NBRC 100395).